A 398-amino-acid polypeptide reads, in one-letter code: Acetate kinase (398 aa).

Asn8 is a Mg(2+) binding site. Residue Lys15 participates in ATP binding. Residue Arg89 coordinates substrate. The active-site Proton donor/acceptor is the Asp146. Residues 206–210 (HIGNG), 283–285 (DMR), and 331–335 (GMGEN) each bind ATP. Glu383 serves as a coordination point for Mg(2+).

The protein belongs to the acetokinase family. In terms of assembly, homodimer. The cofactor is Mg(2+). Mn(2+) serves as cofactor.

Its subcellular location is the cytoplasm. The catalysed reaction is acetate + ATP = acetyl phosphate + ADP. It functions in the pathway metabolic intermediate biosynthesis; acetyl-CoA biosynthesis; acetyl-CoA from acetate: step 1/2. In terms of biological role, catalyzes the formation of acetyl phosphate from acetate and ATP. Can also catalyze the reverse reaction. The polypeptide is Acetate kinase (Streptococcus pyogenes serotype M1).